The primary structure comprises 303 residues: UDP-3-O-acyl-N-acetylglucosamine deacetylase (303 aa).

Residues H78, H237, and D241 each coordinate Zn(2+). Residue H264 is the Proton donor of the active site.

The protein belongs to the LpxC family. Requires Zn(2+) as cofactor.

It carries out the reaction a UDP-3-O-[(3R)-3-hydroxyacyl]-N-acetyl-alpha-D-glucosamine + H2O = a UDP-3-O-[(3R)-3-hydroxyacyl]-alpha-D-glucosamine + acetate. It functions in the pathway glycolipid biosynthesis; lipid IV(A) biosynthesis; lipid IV(A) from (3R)-3-hydroxytetradecanoyl-[acyl-carrier-protein] and UDP-N-acetyl-alpha-D-glucosamine: step 2/6. In terms of biological role, catalyzes the hydrolysis of UDP-3-O-myristoyl-N-acetylglucosamine to form UDP-3-O-myristoylglucosamine and acetate, the committed step in lipid A biosynthesis. The chain is UDP-3-O-acyl-N-acetylglucosamine deacetylase from Pseudomonas putida (strain ATCC 700007 / DSM 6899 / JCM 31910 / BCRC 17059 / LMG 24140 / F1).